We begin with the raw amino-acid sequence, 297 residues long: Ribosomal RNA small subunit methyltransferase H (297 aa).

S-adenosyl-L-methionine is bound by residues 34-36, aspartate 54, phenylalanine 88, aspartate 106, and glutamine 113; that span reads AGH. A disordered region spans residues 272 to 297; it reads PLTAGEEETDRNPRARSAKLRAAEKK.

Belongs to the methyltransferase superfamily. RsmH family.

It localises to the cytoplasm. The enzyme catalyses cytidine(1402) in 16S rRNA + S-adenosyl-L-methionine = N(4)-methylcytidine(1402) in 16S rRNA + S-adenosyl-L-homocysteine + H(+). Functionally, specifically methylates the N4 position of cytidine in position 1402 (C1402) of 16S rRNA. The sequence is that of Ribosomal RNA small subunit methyltransferase H from Acidobacterium capsulatum (strain ATCC 51196 / DSM 11244 / BCRC 80197 / JCM 7670 / NBRC 15755 / NCIMB 13165 / 161).